Here is a 76-residue protein sequence, read N- to C-terminus: KANTR integral membrane protein (76 aa).

The first 25 residues, 1–25 (MSPFSLLILVICAFSLFFLINLSRG), serve as a signal peptide directing secretion. Over 26–34 (LSILLVFTK) the chain is Extracellular. The helical transmembrane segment at 35-55 (NQLLALLLLSIVSLFSISLIS) threads the bilayer. The Cytoplasmic portion of the chain corresponds to 56 to 76 (ALIFFDLLPSTFFGFILLLFF).

It localises to the membrane. This Mus musculus (Mouse) protein is KANTR integral membrane protein.